A 313-amino-acid polypeptide reads, in one-letter code: Putative HTH-type transcriptional regulatory protein Msm_0453 (313 aa).

The HTH cro/C1-type domain maps to 131 to 189 (IKQYREEYSLSLKDLADLAHVSRATMYKYENEIVRANTETAMILEEILNTKVTLDIDLL). A DNA-binding region (H-T-H motif) is located at residues 142-161 (LKDLADLAHVSRATMYKYEN).

The protein is Putative HTH-type transcriptional regulatory protein Msm_0453 of Methanobrevibacter smithii (strain ATCC 35061 / DSM 861 / OCM 144 / PS).